Consider the following 185-residue polypeptide: Transcriptional repressor NrdR (185 aa).

Residues 1-24 are disordered; the sequence is MRCPFCGGPDTQVKDSRPSEDSSA. A zinc finger lies at 3–34; that stretch reads CPFCGGPDTQVKDSRPSEDSSAIRRRRVCPDC. Residues 12 to 24 are compositionally biased toward basic and acidic residues; that stretch reads QVKDSRPSEDSSA. Residues 49-139 form the ATP-cone domain; sequence LVVLKRSGKR…VYKNFREAQD (91 aa). The disordered stretch occupies residues 149 to 185; the sequence is ERLEGEGDLPEDGEAAPAPPDEVVAAPRRGRPARKRA. A compositionally biased stretch (basic residues) spans 176–185; the sequence is RRGRPARKRA.

The protein belongs to the NrdR family. The cofactor is Zn(2+).

Negatively regulates transcription of bacterial ribonucleotide reductase nrd genes and operons by binding to NrdR-boxes. The chain is Transcriptional repressor NrdR from Methylorubrum extorquens (strain PA1) (Methylobacterium extorquens).